The sequence spans 200 residues: COMM domain-containing protein 7 (200 aa).

The COMM domain maps to 133–200 (QLIDMEWRFG…RVRASMECLS (68 aa)).

Belongs to the COMM domain-containing protein 7 family. Component of the commander complex consisting of the CCC subcomplex and the retriever subcomplex. Component of the CCC (COMMD/CCDC22/CCDC93) subcomplex consisting of COMMD1, COMMD2, COMMD3, COMMD4, COMMD5, COMMD6, COMMD7, COMMD8, COMMD9, COMMD10, CCDC22 and CCDC93; within the complex forms a heterodimer with COMMD9. Interacts with RELA. Interacts with CCDC22, CCDC93, SCNN1B, CUL7.

It is found in the cytoplasmic vesicle. Its function is as follows. Scaffold protein in the commander complex that is essential for endosomal recycling of transmembrane cargos; the commander complex is composed of the CCC subcomplex and the retriever subcomplex. May modulate activity of cullin-RING E3 ubiquitin ligase (CRL) complexes. Associates with the NF-kappa-B complex and suppresses its transcriptional activity. This is COMM domain-containing protein 7 (Commd7) from Mus musculus (Mouse).